The primary structure comprises 347 residues: NADH-ubiquinone oxidoreductase chain 2 (347 aa).

11 helical membrane passes run 3–23 (PMTS…VLMS), 25–45 (HWFM…PILM), 59–79 (YFLT…INLM), 96–116 (TLIT…FWVP), 122–142 (VSLS…LSLL), 149–169 (INTN…GWGG), 178–198 (IMAY…IYNP), 200–220 (LSLL…MLLI), 240–260 (ITTM…LTGF), 274–294 (NSVI…FFYM), and 326–346 (MTML…FISL).

Belongs to the complex I subunit 2 family. As to quaternary structure, core subunit of respiratory chain NADH dehydrogenase (Complex I) which is composed of 45 different subunits. Interacts with TMEM242.

The protein resides in the mitochondrion inner membrane. It catalyses the reaction a ubiquinone + NADH + 5 H(+)(in) = a ubiquinol + NAD(+) + 4 H(+)(out). Its function is as follows. Core subunit of the mitochondrial membrane respiratory chain NADH dehydrogenase (Complex I) which catalyzes electron transfer from NADH through the respiratory chain, using ubiquinone as an electron acceptor. Essential for the catalytic activity and assembly of complex I. The sequence is that of NADH-ubiquinone oxidoreductase chain 2 from Sylvisorex granti (Grant's forest shrew).